The sequence spans 668 residues: Lebercilin-like protein (668 aa).

Positions S17–A44 are disordered. Basic and acidic residues predominate over residues N22 to R31. 2 coiled-coil regions span residues L148 to E259 and A305 to I336. The disordered stretch occupies residues Y351–S402. A compositionally biased stretch (polar residues) spans P368–S380. Residues E420–V440 are a coiled coil. Disordered regions lie at residues R495–Q520, L533–S581, and S605–I668. Residues A546–H558 are compositionally biased toward polar residues. Composition is skewed to basic and acidic residues over residues S560–S572 and G621–H632. A compositionally biased stretch (polar residues) spans P633–T660.

It belongs to the LCA5 family.

The polypeptide is Lebercilin-like protein (Macaca fascicularis (Crab-eating macaque)).